The chain runs to 169 residues: MNNEILPRNFYERPTLVVAGELLGKILKFSNFSGVITEVEAYIGMDDPACHAARGYTDRTSVMFGIPGFSYVYFIYGMYYCLNIVTETEGFPAAVLIRGLKLIEPLKANLSGPGILCKRLNITREHNKLDLTISHEFCVYESHINLDYVCTPRIGISKGKEKFWRFKIF.

Belongs to the DNA glycosylase MPG family.

The protein is Putative 3-methyladenine DNA glycosylase of Wolbachia sp. subsp. Brugia malayi (strain TRS).